Here is a 211-residue protein sequence, read N- to C-terminus: Hypoxanthine-guanine phosphoribosyltransferase (211 aa).

The interval 1–20 (MSNSAKSPSGPVGDEGRRNY) is disordered. GMP is bound by residues lysine 66, 125–133 (EDIVDSAIT), lysine 157, and aspartate 185. The active-site Proton acceptor is aspartate 129. Aspartate 185 is a Mg(2+) binding site.

It belongs to the purine/pyrimidine phosphoribosyltransferase family. The cofactor is Mg(2+).

It localises to the cytoplasm. It carries out the reaction IMP + diphosphate = hypoxanthine + 5-phospho-alpha-D-ribose 1-diphosphate. It catalyses the reaction GMP + diphosphate = guanine + 5-phospho-alpha-D-ribose 1-diphosphate. It functions in the pathway purine metabolism; IMP biosynthesis via salvage pathway; IMP from hypoxanthine: step 1/1. Functionally, converts guanine to guanosine monophosphate, and hypoxanthine to inosine monophosphate. Transfers the 5-phosphoribosyl group from 5-phosphoribosylpyrophosphate onto the purine. Plays a central role in the generation of purine nucleotides through the purine salvage pathway. The chain is Hypoxanthine-guanine phosphoribosyltransferase from Leishmania donovani.